A 248-amino-acid chain; its full sequence is MKKIVLLRHGESAWNKENRFTGWTDVDLTEKGVAEAEKAGVTLREYGFNFDKAYTSYLKRAVKTLNCVLDKMNLDWIPVEKSWRLNEKHYGDLQGLNKAETAEKYGEEQVLIWRRSYDIAPNPLSESDLRNPRFDYRYHEVSDAELPRTESLKDTIDRIMPYWESDIFPALKDAHTLLVVAHGNSLRGIIKHLKHISDEDIIKLNLPTAVPYVFEFDENLNVANDYFLGNPEEIRKLMEAVANQGKKK.

Substrate is bound by residues arginine 8–asparagine 15, threonine 21–glycine 22, arginine 60, glutamate 87–tyrosine 90, lysine 98, arginine 114–arginine 115, and glycine 183–asparagine 184. The active-site Tele-phosphohistidine intermediate is the histidine 9. Glutamate 87 functions as the Proton donor/acceptor in the catalytic mechanism.

Belongs to the phosphoglycerate mutase family. BPG-dependent PGAM subfamily.

The enzyme catalyses (2R)-2-phosphoglycerate = (2R)-3-phosphoglycerate. It functions in the pathway carbohydrate degradation; glycolysis; pyruvate from D-glyceraldehyde 3-phosphate: step 3/5. Catalyzes the interconversion of 2-phosphoglycerate and 3-phosphoglycerate. This chain is 2,3-bisphosphoglycerate-dependent phosphoglycerate mutase 2, found in Bacteroides thetaiotaomicron (strain ATCC 29148 / DSM 2079 / JCM 5827 / CCUG 10774 / NCTC 10582 / VPI-5482 / E50).